A 235-amino-acid chain; its full sequence is Flavonoid 3',5'-methyltransferase (235 aa).

Residues Val-51, Glu-73, Gly-75–Val-76, Ser-81, Asp-99, and Ala-128 each bind S-adenosyl-L-methionine. Asp-151 is an a divalent metal cation binding site. Position 153 (Asp-153) interacts with S-adenosyl-L-methionine. Asp-177 and Asn-178 together coordinate a divalent metal cation.

The protein belongs to the class I-like SAM-binding methyltransferase superfamily. Cation-dependent O-methyltransferase family. CCoAMT subfamily. Requires a divalent metal cation as cofactor.

It is found in the cytoplasm. It catalyses the reaction S-adenosyl-L-methionine + a 3'-hydroxyflavonoid = S-adenosyl-L-homocysteine + a 3'-methoxyflavonoid.. The enzyme catalyses S-adenosyl-L-methionine + a 5'-hydroxy-3'-methoxyflavonoid = S-adenosyl-L-homocysteine + a 3',5'-dimethoxyflavonoid.. It functions in the pathway pigment biosynthesis; anthocyanin biosynthesis. Functionally, mediates O-methylation of anthocyanins. Anthocyanins are major pigments in grapes: at ripening initiation in red grapevine berries, the exocarp turns color from green to red and then to purple due to the accumulation and extent of methylation of anthocyanins. Catalyzes both 3' and 5' O-methylation of anthocyanins, with a preference for glycosylated substrates. Active on both anthocyanins and flavonols in vitro. Most active with delphinidin 3-glucoside but also acts on cyanidin 3-glucoside, cyanidin, myricetin, quercetin and quercetin 3-glucoside. Not able to methylate flavan type skeletons with chiral centers, such as catechins or dihydroquercetin. This Vitis vinifera (Grape) protein is Flavonoid 3',5'-methyltransferase (FAOMT).